The sequence spans 234 residues: Large ribosomal subunit protein uL1 (234 aa).

This sequence belongs to the universal ribosomal protein uL1 family. As to quaternary structure, part of the 50S ribosomal subunit.

In terms of biological role, binds directly to 23S rRNA. The L1 stalk is quite mobile in the ribosome, and is involved in E site tRNA release. Functionally, protein L1 is also a translational repressor protein, it controls the translation of the L11 operon by binding to its mRNA. This is Large ribosomal subunit protein uL1 from Pseudoalteromonas translucida (strain TAC 125).